Here is a 408-residue protein sequence, read N- to C-terminus: Protein trichome birefringence-like 14 (408 aa).

The chain crosses the membrane as a helical; Signal-anchor for type II membrane protein span at residues 11–31 (GSVSLALIVLILLVIILLVSE). Residues 131–133 (GDS) carry the GDS motif motif. The short motif at 387–401 (DCLHWCLPGIPDTWN) is the DCXHWCLPGXXDXWN motif element.

The protein belongs to the PC-esterase family. TBL subfamily.

The protein resides in the membrane. May act as a bridging protein that binds pectin and other cell wall polysaccharides. Probably involved in maintaining esterification of pectins. May be involved in the specific O-acetylation of cell wall polymers. In Arabidopsis thaliana (Mouse-ear cress), this protein is Protein trichome birefringence-like 14 (TBL14).